We begin with the raw amino-acid sequence, 332 residues long: Phospho-N-acetylmuramoyl-pentapeptide-transferase (332 aa).

A run of 10 helical transmembrane segments spans residues 3-23 (FALM…PRFI), 52-72 (MGGT…ATAF), 74-94 (LLTG…VVGF), 115-135 (LALQ…GAGG), 140-160 (VFGH…FWLV), 172-192 (IDGL…VIAF), 197-217 (FDIL…FVYN), 223-243 (IFMG…ISIA), 248-268 (WTLL…MLQV), and 311-331 (VDFF…AILY).

It belongs to the glycosyltransferase 4 family. MraY subfamily. Mg(2+) is required as a cofactor.

Its subcellular location is the cell membrane. It catalyses the reaction UDP-N-acetyl-alpha-D-muramoyl-L-alanyl-gamma-D-glutamyl-L-lysyl-D-alanyl-D-alanine + di-trans,octa-cis-undecaprenyl phosphate = Mur2Ac(oyl-L-Ala-gamma-D-Glu-L-Lys-D-Ala-D-Ala)-di-trans,octa-cis-undecaprenyl diphosphate + UMP. It functions in the pathway cell wall biogenesis; peptidoglycan biosynthesis. Catalyzes the initial step of the lipid cycle reactions in the biosynthesis of the cell wall peptidoglycan: transfers peptidoglycan precursor phospho-MurNAc-pentapeptide from UDP-MurNAc-pentapeptide onto the lipid carrier undecaprenyl phosphate, yielding undecaprenyl-pyrophosphoryl-MurNAc-pentapeptide, known as lipid I. The sequence is that of Phospho-N-acetylmuramoyl-pentapeptide-transferase from Streptococcus suis (strain 98HAH33).